The sequence spans 594 residues: UvrABC system protein C (594 aa).

A GIY-YIG domain is found at 17 to 94; sequence LEPGCYLMKD…IKQYQPRYNI (78 aa). Residues 199–234 enclose the UVR domain; sequence KTILHHLEDRMNKASEQLDFEQAKEYRDMIQHIHNL.

The protein belongs to the UvrC family. As to quaternary structure, interacts with UvrB in an incision complex.

Its subcellular location is the cytoplasm. Functionally, the UvrABC repair system catalyzes the recognition and processing of DNA lesions. UvrC both incises the 5' and 3' sides of the lesion. The N-terminal half is responsible for the 3' incision and the C-terminal half is responsible for the 5' incision. The polypeptide is UvrABC system protein C (Staphylococcus epidermidis (strain ATCC 12228 / FDA PCI 1200)).